The primary structure comprises 332 residues: Glycerol-3-phosphate dehydrogenase [NAD(P)+] (332 aa).

Ser11, Phe12, Lys32, and Lys106 together coordinate NADPH. Sn-glycerol 3-phosphate-binding residues include Lys106, Gly137, and Ser139. Ala141 provides a ligand contact to NADPH. Lys192, Asp245, Ser255, Arg256, and Asn257 together coordinate sn-glycerol 3-phosphate. The active-site Proton acceptor is Lys192. Arg256 provides a ligand contact to NADPH. 2 residues coordinate NADPH: Val280 and Glu282.

It belongs to the NAD-dependent glycerol-3-phosphate dehydrogenase family.

It localises to the cytoplasm. It catalyses the reaction sn-glycerol 3-phosphate + NAD(+) = dihydroxyacetone phosphate + NADH + H(+). It carries out the reaction sn-glycerol 3-phosphate + NADP(+) = dihydroxyacetone phosphate + NADPH + H(+). It participates in membrane lipid metabolism; glycerophospholipid metabolism. In terms of biological role, catalyzes the reduction of the glycolytic intermediate dihydroxyacetone phosphate (DHAP) to sn-glycerol 3-phosphate (G3P), the key precursor for phospholipid synthesis. In Staphylococcus aureus (strain bovine RF122 / ET3-1), this protein is Glycerol-3-phosphate dehydrogenase [NAD(P)+].